The chain runs to 319 residues: MKKIAVLTSGGDAPGMNAAVRAVVRYGVRHGLEVIGVRRGYSGLIDGDFVKLEYKDVAGITEKGGTILRTSRCEEFKTEEGRELAAKQIKKHGIEGLVVIGGEGSLTGAHLLYEEHKIPVVGIPATIDNDIGLTDMCIGVDTCLNTVMDAVQKLKDTASSHERAFIVEVMGRHSGYIALMAGLVTGAEAIIVPEIPVDYSQLADRILEERRRGKINSIIIVAEGAASAYTVARHLEYRIGYETRITILGHVQRGGSPTASDRRLALSMGVEAVDALLDGEVDVMIALQGNKLVRVPIMEALSTKKTIDKKLYEIAYMLS.

Glycine 11 lines the ATP pocket. 21-25 (RAVVR) contacts ADP. ATP is bound by residues 72 to 73 (RC) and 102 to 105 (GEGS). Residue glutamate 103 coordinates Mg(2+). 126–128 (TID) provides a ligand contact to substrate. Aspartate 128 functions as the Proton acceptor in the catalytic mechanism. Residue lysine 155 coordinates ADP. Substrate contacts are provided by residues arginine 163 and 170–172 (MGR). Residues 186–188 (GAE), arginine 212, and 214–216 (KIN) each bind ADP. Residues glutamate 223, arginine 244, and 250–253 (HVQR) contribute to the substrate site.

The protein belongs to the phosphofructokinase type A (PFKA) family. ATP-dependent PFK group I subfamily. Prokaryotic clade 'B1' sub-subfamily. In terms of assembly, homotetramer. Mg(2+) is required as a cofactor.

It is found in the cytoplasm. The enzyme catalyses beta-D-fructose 6-phosphate + ATP = beta-D-fructose 1,6-bisphosphate + ADP + H(+). It participates in carbohydrate degradation; glycolysis; D-glyceraldehyde 3-phosphate and glycerone phosphate from D-glucose: step 3/4. Its activity is regulated as follows. Allosterically activated by ADP and other diphosphonucleosides, and allosterically inhibited by phosphoenolpyruvate. Its function is as follows. Catalyzes the phosphorylation of D-fructose 6-phosphate to fructose 1,6-bisphosphate by ATP, the first committing step of glycolysis. The sequence is that of ATP-dependent 6-phosphofructokinase from Thermotoga petrophila (strain ATCC BAA-488 / DSM 13995 / JCM 10881 / RKU-1).